We begin with the raw amino-acid sequence, 320 residues long: ATP synthase gamma chain (320 aa).

This sequence belongs to the ATPase gamma chain family. F-type ATPases have 2 components, CF(1) - the catalytic core - and CF(0) - the membrane proton channel. CF(1) has five subunits: alpha(3), beta(3), gamma(1), delta(1), epsilon(1). CF(0) has three main subunits: a, b and c.

The protein resides in the cell membrane. Produces ATP from ADP in the presence of a proton gradient across the membrane. The gamma chain is believed to be important in regulating ATPase activity and the flow of protons through the CF(0) complex. The sequence is that of ATP synthase gamma chain from Lactobacillus helveticus (strain DPC 4571).